A 455-amino-acid polypeptide reads, in one-letter code: Protein 60A (455 aa).

A signal peptide spans 1–36 (MSGLRNTSEAVAVLASLGLGMVLLMFVATTPPAVEA). Residues 37 to 335 (TQSGIYIDNG…SASHPRKRKK (299 aa)) constitute a propeptide that is removed on maturation. A compositionally biased stretch (acidic residues) spans 108–118 (GLSDQDEDDDY). A disordered region spans residues 108–138 (GLSDQDEDDDYERGHRSRRSADLEEDEGEQQ). Asn-238 and Asn-250 each carry an N-linked (GlcNAc...) asparagine glycan. The segment at 316-345 (AHSSHHRSKRSASHPRKRKKSVSPNNVPLL) is disordered. Over residues 318–336 (SSHHRSKRSASHPRKRKKS) the composition is skewed to basic residues. 3 cysteine pairs are disulfide-bonded: Cys-354–Cys-420, Cys-383–Cys-452, and Cys-387–Cys-454. Asn-396 carries N-linked (GlcNAc...) asparagine glycosylation.

Belongs to the TGF-beta family. Homodimer; disulfide-linked. Interacts with nord and dpp. In terms of tissue distribution, expressed in cells of the developing foregut and hindgut during germ band retraction and later embryonic stages. Expressed in the wing disk, mainly in the posterior compartment in the pteropleural and medial regions extending into the progenitors of the scutellum. High levels are found within the posterior and anterior compartments of the wing pouch and low levels in the hinge region. In the eye/antennal disk, expression is highest anterior to the morphogenetic furrow and in the medial regions with lower levels of expression posterior to the morphogenetic furrow. Expressed throughout the posterior compartment of the leg imaginal disks and within the ventral anterior compartment.

The protein resides in the secreted. Functionally, required for the growth of imaginal tissues and for patterning of the adult wing. The sequence is that of Protein 60A (gbb) from Drosophila melanogaster (Fruit fly).